A 260-amino-acid polypeptide reads, in one-letter code: Hydroxyethylthiazole kinase (260 aa).

Met-38 provides a ligand contact to substrate. ATP contacts are provided by Arg-114 and Thr-159. Gly-186 serves as a coordination point for substrate.

It belongs to the Thz kinase family. It depends on Mg(2+) as a cofactor.

The enzyme catalyses 5-(2-hydroxyethyl)-4-methylthiazole + ATP = 4-methyl-5-(2-phosphooxyethyl)-thiazole + ADP + H(+). The protein operates within cofactor biosynthesis; thiamine diphosphate biosynthesis; 4-methyl-5-(2-phosphoethyl)-thiazole from 5-(2-hydroxyethyl)-4-methylthiazole: step 1/1. Catalyzes the phosphorylation of the hydroxyl group of 4-methyl-5-beta-hydroxyethylthiazole (THZ). This is Hydroxyethylthiazole kinase from Helicobacter pylori (strain G27).